Here is a 321-residue protein sequence, read N- to C-terminus: tRNA U34 carboxymethyltransferase (321 aa).

Carboxy-S-adenosyl-L-methionine contacts are provided by residues Lys-90, Trp-104, Lys-109, Gly-129, 151 to 153 (DPT), 180 to 181 (IE), Met-195, Tyr-199, and Arg-314.

It belongs to the class I-like SAM-binding methyltransferase superfamily. CmoB family. In terms of assembly, homotetramer.

It catalyses the reaction carboxy-S-adenosyl-L-methionine + 5-hydroxyuridine(34) in tRNA = 5-carboxymethoxyuridine(34) in tRNA + S-adenosyl-L-homocysteine + H(+). In terms of biological role, catalyzes carboxymethyl transfer from carboxy-S-adenosyl-L-methionine (Cx-SAM) to 5-hydroxyuridine (ho5U) to form 5-carboxymethoxyuridine (cmo5U) at position 34 in tRNAs. This is tRNA U34 carboxymethyltransferase from Actinobacillus succinogenes (strain ATCC 55618 / DSM 22257 / CCUG 43843 / 130Z).